Reading from the N-terminus, the 111-residue chain is uncharacterized protein (111 aa).

2 helical membrane passes run 29-49 (LLNF…ATAV) and 52-72 (ACFA…YLLA).

The protein resides in the membrane. This is an uncharacterized protein from Saccharomyces cerevisiae (strain ATCC 204508 / S288c) (Baker's yeast).